A 240-amino-acid chain; its full sequence is MLRLFLRRFTKALLWFAGGSVLLVLVFRFVPPPGTALMVERKIESWVDGEPIDLQRTWKPWDEISDDLKVAVIAGEDQKFPEHWGFDLSAIKAALAHNELGGSIRGASTLSQQVSKNLFLWSGRSYLRKGLEAWFTALIEVFWPKQRILEVYLNSVEWDDGVFGAEAAARHHFGVGARSLSRQQASYLAAVLPNPRVWSASHPTAYVSRRAGWIRQQMSQLGGDSYLLTLNDSRRAPWAQ.

The chain crosses the membrane as a helical span at residues 12–31; it reads ALLWFAGGSVLLVLVFRFVP.

Belongs to the glycosyltransferase 51 family.

The protein resides in the cell inner membrane. The catalysed reaction is [GlcNAc-(1-&gt;4)-Mur2Ac(oyl-L-Ala-gamma-D-Glu-L-Lys-D-Ala-D-Ala)](n)-di-trans,octa-cis-undecaprenyl diphosphate + beta-D-GlcNAc-(1-&gt;4)-Mur2Ac(oyl-L-Ala-gamma-D-Glu-L-Lys-D-Ala-D-Ala)-di-trans,octa-cis-undecaprenyl diphosphate = [GlcNAc-(1-&gt;4)-Mur2Ac(oyl-L-Ala-gamma-D-Glu-L-Lys-D-Ala-D-Ala)](n+1)-di-trans,octa-cis-undecaprenyl diphosphate + di-trans,octa-cis-undecaprenyl diphosphate + H(+). It functions in the pathway cell wall biogenesis; peptidoglycan biosynthesis. In terms of biological role, peptidoglycan polymerase that catalyzes glycan chain elongation from lipid-linked precursors. This chain is Biosynthetic peptidoglycan transglycosylase, found in Pseudomonas fluorescens (strain Pf0-1).